The primary structure comprises 391 residues: uncharacterized protein (391 aa).

The region spanning 247-387 is the Flavodoxin-like domain; it reads AVIVYATIYS…KIKEFGRKLA (141 aa).

This is an uncharacterized protein from Methanocaldococcus jannaschii (strain ATCC 43067 / DSM 2661 / JAL-1 / JCM 10045 / NBRC 100440) (Methanococcus jannaschii).